The chain runs to 262 residues: Polyamine aminopropyltransferase (262 aa).

Residues 1 to 249 enclose the PABS domain; it reads MWITQEITPY…DIHRAAFALP (249 aa). Asn-29 is a binding site for S-methyl-5'-thioadenosine. Spermidine is bound at residue Asp-83. The active-site Proton acceptor is the Asp-155.

Homodimer.

The protein localises to the cytoplasm. It carries out the reaction S-adenosyl 3-(methylsulfanyl)propylamine + putrescine = S-methyl-5'-thioadenosine + spermidine + H(+). The protein operates within amine and polyamine biosynthesis; spermidine biosynthesis; spermidine from putrescine: step 1/1. Inhibited by methylglyoxal bis(cyclopentylamidinohydrazone)(MGBCP). Involved in the cell growth and proliferation. Catalyzes the irreversible transfer of a propylamine group from the amino donor S-adenosylmethioninamine (decarboxy-AdoMet) to putrescine (1,4-diaminobutane) to yield spermidine. Spermidine cannot be used as an aminopropyl acceptor. This is Polyamine aminopropyltransferase from Helicobacter pylori (strain ATCC 700392 / 26695) (Campylobacter pylori).